The primary structure comprises 1144 residues: Ribonucleoside-diphosphate reductase large subunit (1144 aa).

The tract at residues 1 to 33 (MANRPAASALAGARSPSERQEPREPEVAPPGGD) is disordered. Residues 16-26 (PSERQEPREPE) show a composition bias toward basic and acidic residues. The short motif at 55-75 (AYRISDSSFVQCGSNCSMIID) is the RIP homotypic interaction motif (RHIM) element. Residues 118–324 (SGPSATTSVG…TDPGYPVPLE (207 aa)) form a disordered region. Residues 119-132 (GPSATTSVGTQTSG) are compositionally biased toward polar residues. The span at 141–159 (TPEPQGPQAVPPPPPPPFP) shows a compositional bias: pro residues. Positions 164-179 (CCARRDARGGAEKDVG) are enriched in basic and acidic residues. Acidic residues predominate over residues 192-204 (SETEDSDSSDEDT). 2 stretches are compositionally biased toward low complexity: residues 205-216 (GSGSETLSRSSS) and 279-305 (GSATDPRASADSDSAAHAAAPQADVAP). Substrate is bound by residues threonine 573, 588–589 (SC), glycine 619, 798–802 (NLCTE), and 975–979 (PTAAS). Cysteine 589 and cysteine 815 are joined by a disulfide. Asparagine 798 acts as the Proton acceptor in catalysis. Cysteine 800 acts as the Cysteine radical intermediate in catalysis. The Proton acceptor role is filled by glutamate 802.

Belongs to the ribonucleoside diphosphate reductase large chain family. In terms of assembly, heterotetramer composed of a homodimer of the large subunit (R1) and a homodimer of the small subunit (R2). Larger multisubunit protein complex are also active, composed of (R1)n(R2)n. May self-assemble (via RIP homotypic interaction motif/RHIM) into homomeric fibrillar amyloid structures. Interacts (via RHIM) with human RIPK1 (via RHIM). Interacts (via RHIM) with human RIPK3 (via RHIM). May interact (via RHIM) with human ZBP1 (via RHIM). Interacts (via C-terminus) with host CASP8.

It carries out the reaction a 2'-deoxyribonucleoside 5'-diphosphate + [thioredoxin]-disulfide + H2O = a ribonucleoside 5'-diphosphate + [thioredoxin]-dithiol. Functionally, ribonucleoside-diphosphate reductase holoenzyme that provides the precursors necessary for viral DNA synthesis. Allows virus growth in non-dividing cells, as well as reactivation from latency in infected hosts. Catalyzes the biosynthesis of deoxyribonucleotides from the corresponding ribonucleotides. The N-terminal region confers antiapoptotic activity in differentiated cells such as neurons and is important for viral reactivation to increase neural survivability. Prevents host necroptosis by targeting host RIPK1 and RIPK3, thereby hampering the formation of necroptotic RIPK1-RIPK3 complexes. May form hetero-amyloid structures with host proteins RIPK3 or ZBP1, thereby preventing RIPK3- and ZBP1-mediated necroptosis. In addition, inhibits extrinsic apoptosis by targeting host CASP8. The polypeptide is Ribonucleoside-diphosphate reductase large subunit (Homo sapiens (Human)).